Here is a 318-residue protein sequence, read N- to C-terminus: Homoserine kinase (318 aa).

97 to 107 (PIGSGLGSSAC) is an ATP binding site.

This sequence belongs to the GHMP kinase family. Homoserine kinase subfamily.

The protein resides in the cytoplasm. The enzyme catalyses L-homoserine + ATP = O-phospho-L-homoserine + ADP + H(+). The protein operates within amino-acid biosynthesis; L-threonine biosynthesis; L-threonine from L-aspartate: step 4/5. Functionally, catalyzes the ATP-dependent phosphorylation of L-homoserine to L-homoserine phosphate. In Photobacterium profundum (strain SS9), this protein is Homoserine kinase.